Consider the following 325-residue polypeptide: Elongation factor P--(R)-beta-lysine ligase (325 aa).

76 to 78 is a substrate binding site; it reads SPE. ATP is bound by residues 100-102 and asparagine 109; that span reads RNE. A substrate-binding site is contributed by tyrosine 118. 244–245 is an ATP binding site; sequence EL. Residue glutamate 251 coordinates substrate. Glycine 300 is a binding site for ATP.

It belongs to the class-II aminoacyl-tRNA synthetase family. EpmA subfamily. As to quaternary structure, homodimer.

It carries out the reaction D-beta-lysine + L-lysyl-[protein] + ATP = N(6)-((3R)-3,6-diaminohexanoyl)-L-lysyl-[protein] + AMP + diphosphate + H(+). Functionally, with EpmB is involved in the beta-lysylation step of the post-translational modification of translation elongation factor P (EF-P). Catalyzes the ATP-dependent activation of (R)-beta-lysine produced by EpmB, forming a lysyl-adenylate, from which the beta-lysyl moiety is then transferred to the epsilon-amino group of a conserved specific lysine residue in EF-P. This is Elongation factor P--(R)-beta-lysine ligase from Enterobacter sp. (strain 638).